A 617-amino-acid polypeptide reads, in one-letter code: Transmembrane protein 232 (617 aa).

The helical transmembrane segment at 129-149 (LVKIGYLIFLRLFVFFLHGHL) threads the bilayer. Positions 567–604 (LKQIEAVCEAQNRKDEEEKEKIRFQEIMKQRERKLNKQ) form a coiled coil. The segment at 598–617 (ERKLNKQTKPYEITPSEKKE) is disordered.

Its subcellular location is the membrane. Plays a critical role for male fertility and sperm motility by regulating sperm cytoplasm removal and maintaining axoneme integrity. The protein is Transmembrane protein 232 (Tmem232) of Rattus norvegicus (Rat).